A 485-amino-acid polypeptide reads, in one-letter code: Cysteine protease atg4da (485 aa).

The tract at residues 22–46 (ASASSKRHLGHGAVPDGIREGSGEP) is disordered. C131 serves as the catalytic Nucleophile. Active-site residues include D368 and H370.

It belongs to the peptidase C54 family.

The protein resides in the cytoplasm. It carries out the reaction [protein]-C-terminal L-amino acid-glycyl-phosphatidylethanolamide + H2O = [protein]-C-terminal L-amino acid-glycine + a 1,2-diacyl-sn-glycero-3-phosphoethanolamine. It catalyses the reaction [protein]-C-terminal L-amino acid-glycyl-phosphatidylserine + H2O = [protein]-C-terminal L-amino acid-glycine + a 1,2-diacyl-sn-glycero-3-phospho-L-serine. Cysteine protease that plays a key role in autophagy by mediating both proteolytic activation and delipidation of ATG8 family proteins. The protease activity is required for proteolytic activation of ATG8 family proteins to reveal a C-terminal glycine. Exposure of the glycine at the C-terminus is essential for ATG8 proteins conjugation to phosphatidylethanolamine (PE) and insertion to membranes, which is necessary for autophagy. In addition to the protease activity, also mediates delipidation of ATG8 family proteins. Catalyzes delipidation of PE-conjugated forms of ATG8 proteins during macroautophagy. Also involved in non-canonical autophagy, a parallel pathway involving conjugation of ATG8 proteins to single membranes at endolysosomal compartments, by catalyzing delipidation of ATG8 proteins conjugated to phosphatidylserine (PS). ATG4D plays a role in the autophagy-mediated neuronal homeostasis in the central nervous system. This Danio rerio (Zebrafish) protein is Cysteine protease atg4da.